The sequence spans 160 residues: Phosphopantetheine adenylyltransferase (160 aa).

S9 is a substrate binding site. ATP-binding positions include 9–10 (SF) and H17. Substrate is bound by residues K41, V73, and K87. ATP is bound by residues 88–90 (GLR), E98, and 122–128 (YSFVSSS).

The protein belongs to the bacterial CoaD family. In terms of assembly, homohexamer. Mg(2+) is required as a cofactor.

It is found in the cytoplasm. The catalysed reaction is (R)-4'-phosphopantetheine + ATP + H(+) = 3'-dephospho-CoA + diphosphate. Its pathway is cofactor biosynthesis; coenzyme A biosynthesis; CoA from (R)-pantothenate: step 4/5. Its function is as follows. Reversibly transfers an adenylyl group from ATP to 4'-phosphopantetheine, yielding dephospho-CoA (dPCoA) and pyrophosphate. This is Phosphopantetheine adenylyltransferase from Mycobacterium leprae (strain TN).